The chain runs to 479 residues: UDP-N-acetylmuramate--L-alanine ligase (479 aa).

114–120 is a binding site for ATP; it reads GTHGKTT.

The protein belongs to the MurCDEF family.

The protein localises to the cytoplasm. The enzyme catalyses UDP-N-acetyl-alpha-D-muramate + L-alanine + ATP = UDP-N-acetyl-alpha-D-muramoyl-L-alanine + ADP + phosphate + H(+). It participates in cell wall biogenesis; peptidoglycan biosynthesis. Cell wall formation. In Pelodictyon phaeoclathratiforme (strain DSM 5477 / BU-1), this protein is UDP-N-acetylmuramate--L-alanine ligase.